A 309-amino-acid polypeptide reads, in one-letter code: Ribosomal RNA small subunit methyltransferase H (309 aa).

Residues 41–43, aspartate 61, phenylalanine 85, aspartate 102, and glutamine 109 each bind S-adenosyl-L-methionine; that span reads GGH.

The protein belongs to the methyltransferase superfamily. RsmH family.

The protein localises to the cytoplasm. The catalysed reaction is cytidine(1402) in 16S rRNA + S-adenosyl-L-methionine = N(4)-methylcytidine(1402) in 16S rRNA + S-adenosyl-L-homocysteine + H(+). In terms of biological role, specifically methylates the N4 position of cytidine in position 1402 (C1402) of 16S rRNA. The polypeptide is Ribosomal RNA small subunit methyltransferase H (Albidiferax ferrireducens (strain ATCC BAA-621 / DSM 15236 / T118) (Rhodoferax ferrireducens)).